The primary structure comprises 880 residues: Translation initiation factor IF-2 (880 aa).

7 stretches are compositionally biased toward basic and acidic residues: residues 34–43 (HMSSLDDKQV), 59–69 (TEKDSKNSSRK), 82–94 (RRRDNKNEHDNRH), 110–131 (NRRENEDKKTTSAKPAARDLLN), 167–181 (KKVENTRKPKEEKLE), 230–240 (QKEETKPTRKK), and 248–261 (EVPDYERERSEHSD). The tract at residues 34–297 (HMSSLDDKQV…KERPLPETLV (264 aa)) is disordered. Basic residues predominate over residues 262-275 (KARRRRNKKNKRIN). Residues 276–292 (QSKEVKKQPTQRKERPL) are compositionally biased toward basic and acidic residues. Residues 381–550 (KRPPVVTIMG…LLQADVMELK (170 aa)) form the tr-type G domain. Positions 390–397 (GHVDHGKT) are G1. 390–397 (GHVDHGKT) provides a ligand contact to GTP. The G2 stretch occupies residues 415–419 (GITQR). The segment at 436–439 (DTPG) is G3. Residues 436–440 (DTPGH) and 490–493 (NKID) each bind GTP. A G4 region spans residues 490 to 493 (NKID). A G5 region spans residues 526-528 (SAK).

Belongs to the TRAFAC class translation factor GTPase superfamily. Classic translation factor GTPase family. IF-2 subfamily.

It is found in the cytoplasm. Its function is as follows. One of the essential components for the initiation of protein synthesis. Protects formylmethionyl-tRNA from spontaneous hydrolysis and promotes its binding to the 30S ribosomal subunits. Also involved in the hydrolysis of GTP during the formation of the 70S ribosomal complex. This chain is Translation initiation factor IF-2, found in Lactobacillus johnsonii (strain CNCM I-12250 / La1 / NCC 533).